We begin with the raw amino-acid sequence, 122 residues long: Small ribosomal subunit protein uS13 (122 aa).

The tract at residues 95–122 (GLPVRGQRTRTNARTRKGPRKTVAKKKK) is disordered.

It belongs to the universal ribosomal protein uS13 family. Part of the 30S ribosomal subunit. Forms a loose heterodimer with protein S19. Forms two bridges to the 50S subunit in the 70S ribosome.

Its function is as follows. Located at the top of the head of the 30S subunit, it contacts several helices of the 16S rRNA. In the 70S ribosome it contacts the 23S rRNA (bridge B1a) and protein L5 of the 50S subunit (bridge B1b), connecting the 2 subunits; these bridges are implicated in subunit movement. Contacts the tRNAs in the A and P-sites. This is Small ribosomal subunit protein uS13 from Thermoanaerobacter pseudethanolicus (strain ATCC 33223 / 39E) (Clostridium thermohydrosulfuricum).